Here is a 144-residue protein sequence, read N- to C-terminus: UPF0735 ACT domain-containing protein LCABL_12100 (144 aa).

The ACT domain occupies 68-143 (VISLMLHHDR…GVSDVHLVSV (76 aa)).

The protein belongs to the UPF0735 family.

In Lacticaseibacillus casei (strain BL23) (Lactobacillus casei), this protein is UPF0735 ACT domain-containing protein LCABL_12100.